The sequence spans 379 residues: Chaperone protein DnaJ (379 aa).

One can recognise a J domain in the interval 7–72; that stretch reads CYYETLEVER…DKRAAYDRYG (66 aa). A CR-type zinc finger spans residues 135-213; that stretch reads GKTAQIEIPV…CTGSGRVTKE (79 aa). The Zn(2+) site is built by Cys148, Cys151, Cys165, Cys168, Cys187, Cys190, Cys201, and Cys204. CXXCXGXG motif repeat units lie at residues 148–155, 165–172, 187–194, and 201–208; these read CESCSGTG, CSTCGGAG, CPSCQGRG, and CPSCTGSG.

Belongs to the DnaJ family. In terms of assembly, homodimer. Zn(2+) serves as cofactor.

The protein resides in the cytoplasm. Functionally, participates actively in the response to hyperosmotic and heat shock by preventing the aggregation of stress-denatured proteins and by disaggregating proteins, also in an autonomous, DnaK-independent fashion. Unfolded proteins bind initially to DnaJ; upon interaction with the DnaJ-bound protein, DnaK hydrolyzes its bound ATP, resulting in the formation of a stable complex. GrpE releases ADP from DnaK; ATP binding to DnaK triggers the release of the substrate protein, thus completing the reaction cycle. Several rounds of ATP-dependent interactions between DnaJ, DnaK and GrpE are required for fully efficient folding. Also involved, together with DnaK and GrpE, in the DNA replication of plasmids through activation of initiation proteins. This is Chaperone protein DnaJ from Rhodopseudomonas palustris (strain HaA2).